A 204-amino-acid polypeptide reads, in one-letter code: Rho GDP-dissociation inhibitor 1 (204 aa).

The disordered stretch occupies residues 1 to 36 (MAEQEPTAEQLAQIAAENEEDEHSVNYKPPAQKSIQ). An N-acetylalanine modification is found at alanine 2. Residue serine 34 is modified to Phosphoserine. Lysine 43 is modified (N6-acetyllysine). A Phosphoserine modification is found at serine 47. Lysine 105 and lysine 127 each carry N6-acetyllysine. Residues lysine 138 and lysine 141 each participate in a glycyl lysine isopeptide (Lys-Gly) (interchain with G-Cter in SUMO1); alternate cross-link. Glycyl lysine isopeptide (Lys-Gly) (interchain with G-Cter in SUMO2); alternate cross-links involve residues lysine 138 and lysine 141. Residue lysine 141 is modified to N6-acetyllysine; alternate. At lysine 141 the chain carries N6-succinyllysine; alternate. Lysine 178 bears the N6-acetyllysine mark.

This sequence belongs to the Rho GDI family. As to quaternary structure, monomer. Interacts with FER. Interacts with PLXNB3. Forms a heterodimer with RAC1. Interacts with RHOA, the affinity is increased by three orders of magnitude when RHOA is prenylated. Interacts with PSMD10; the interaction increases ARHGDIA association with RHOA, leading to ARHGDIA-mediated inactivation of RHOA and ROCK and prolonged AKT activation. Interacts with KANK2; the interaction is direct and may regulate the interaction of ARHGDIA with RHOA, RAC1 and CDC42. Interacts with RHOC. Interacts with CDC42. Interacts with NGFR (via death domain); NGFR binding decreases the affinity for RHOA. In terms of tissue distribution, in kidney glomerulus, expressed in podocytes and mesangial cells.

Its subcellular location is the cytoplasm. Its function is as follows. Controls Rho proteins homeostasis. Regulates the GDP/GTP exchange reaction of the Rho proteins by inhibiting the dissociation of GDP from them, and the subsequent binding of GTP to them. Retains Rho proteins such as CDC42, RAC1 and RHOA in an inactive cytosolic pool, regulating their stability and protecting them from degradation. Actively involved in the recycling and distribution of activated Rho GTPases in the cell, mediates extraction from membranes of both inactive and activated molecules due its exceptionally high affinity for prenylated forms. Through the modulation of Rho proteins, may play a role in cell motility regulation. In glioma cells, inhibits cell migration and invasion by mediating the signals of SEMA5A and PLXNB3 that lead to inactivation of RAC1. This is Rho GDP-dissociation inhibitor 1 (Arhgdia) from Mus musculus (Mouse).